The following is a 171-amino-acid chain: Shikimate kinase (171 aa).

14 to 19 (GAGKST) contacts ATP. Mg(2+) is bound at residue Ser-18. 3 residues coordinate substrate: Asp-36, Arg-60, and Gly-82. Arg-120 provides a ligand contact to ATP. Arg-139 contributes to the substrate binding site. Gln-156 contributes to the ATP binding site.

Belongs to the shikimate kinase family. In terms of assembly, monomer. Mg(2+) is required as a cofactor.

The protein resides in the cytoplasm. The enzyme catalyses shikimate + ATP = 3-phosphoshikimate + ADP + H(+). The protein operates within metabolic intermediate biosynthesis; chorismate biosynthesis; chorismate from D-erythrose 4-phosphate and phosphoenolpyruvate: step 5/7. Functionally, catalyzes the specific phosphorylation of the 3-hydroxyl group of shikimic acid using ATP as a cosubstrate. The protein is Shikimate kinase of Shewanella pealeana (strain ATCC 700345 / ANG-SQ1).